The sequence spans 126 residues: Aspartate 1-decarboxylase (126 aa).

Residue S25 is the Schiff-base intermediate with substrate; via pyruvic acid of the active site. S25 is modified (pyruvic acid (Ser)). Substrate is bound at residue T57. The active-site Proton donor is the Y58. A substrate-binding site is contributed by 73–75; it reads GGA.

This sequence belongs to the PanD family. Heterooctamer of four alpha and four beta subunits. Pyruvate serves as cofactor. Is synthesized initially as an inactive proenzyme, which is activated by self-cleavage at a specific serine bond to produce a beta-subunit with a hydroxyl group at its C-terminus and an alpha-subunit with a pyruvoyl group at its N-terminus.

It localises to the cytoplasm. It catalyses the reaction L-aspartate + H(+) = beta-alanine + CO2. The protein operates within cofactor biosynthesis; (R)-pantothenate biosynthesis; beta-alanine from L-aspartate: step 1/1. Functionally, catalyzes the pyruvoyl-dependent decarboxylation of aspartate to produce beta-alanine. This Stenotrophomonas maltophilia (strain K279a) protein is Aspartate 1-decarboxylase.